We begin with the raw amino-acid sequence, 621 residues long: Proton pump-interactor BIP131 (621 aa).

A coiled-coil region spans residues 250 to 305 (IDEVKRDRQAVRDKIKVLEDQIHAVDGEIAALQDDLTAATARKDKAFEALNELRKT). Over residues 374–387 (SRDGRMRNPDEKPI) the composition is skewed to basic and acidic residues. Residues 374–572 (SRDGRMRNPD…RSTVTKTKTP (199 aa)) form a disordered region. The span at 430–441 (KAPAKAAKAKQP) shows a compositional bias: low complexity. Basic and acidic residues predominate over residues 448 to 516 (PDVHDDEPPK…AEKKLKEKEK (69 aa)). Residues 466–524 (EAKLKEMKRQEEIEKNKLALERKKKQAEKQAMKAAARAEKEAEKKLKEKEKKARKRSAT) are a coiled coil. A helical membrane pass occupies residues 589–609 (WGAPMAALAAALVALLGALVY).

The protein belongs to the plant proton pump-interactor protein family. As to quaternary structure, interacts with BRI1.

Its subcellular location is the cell membrane. May regulate plasma membrane ATPase activity. This Oryza sativa subsp. japonica (Rice) protein is Proton pump-interactor BIP131.